A 174-amino-acid chain; its full sequence is Crossover junction endodeoxyribonuclease RuvC (174 aa).

Residues aspartate 8, glutamate 69, and aspartate 141 contribute to the active site. Mg(2+)-binding residues include aspartate 8, glutamate 69, and aspartate 141.

The protein belongs to the RuvC family. As to quaternary structure, homodimer which binds Holliday junction (HJ) DNA. The HJ becomes 2-fold symmetrical on binding to RuvC with unstacked arms; it has a different conformation from HJ DNA in complex with RuvA. In the full resolvosome a probable DNA-RuvA(4)-RuvB(12)-RuvC(2) complex forms which resolves the HJ. Mg(2+) serves as cofactor.

It is found in the cytoplasm. The catalysed reaction is Endonucleolytic cleavage at a junction such as a reciprocal single-stranded crossover between two homologous DNA duplexes (Holliday junction).. The RuvA-RuvB-RuvC complex processes Holliday junction (HJ) DNA during genetic recombination and DNA repair. Endonuclease that resolves HJ intermediates. Cleaves cruciform DNA by making single-stranded nicks across the HJ at symmetrical positions within the homologous arms, yielding a 5'-phosphate and a 3'-hydroxyl group; requires a central core of homology in the junction. The consensus cleavage sequence is 5'-(A/T)TT(C/G)-3'. Cleavage occurs on the 3'-side of the TT dinucleotide at the point of strand exchange. HJ branch migration catalyzed by RuvA-RuvB allows RuvC to scan DNA until it finds its consensus sequence, where it cleaves and resolves the cruciform DNA. The protein is Crossover junction endodeoxyribonuclease RuvC of Xanthomonas oryzae pv. oryzae (strain PXO99A).